The primary structure comprises 314 residues: Coiled-coil domain-containing protein 42 like-2 (314 aa).

Coiled coils occupy residues Arg-34 to Leu-133 and Asn-175 to Glu-231.

This sequence belongs to the CFAP73 family.

This chain is Coiled-coil domain-containing protein 42 like-2, found in Xenopus tropicalis (Western clawed frog).